The primary structure comprises 60 residues: Large ribosomal subunit protein bL32 (60 aa).

This sequence belongs to the bacterial ribosomal protein bL32 family.

This is Large ribosomal subunit protein bL32 from Persephonella marina (strain DSM 14350 / EX-H1).